Consider the following 395-residue polypeptide: MAKKRVVVLYGGRADEHSISCISTAGVLGAMDTERFEPIPVGITKDGKWIINGEDPRGWNLDGGELPTVKITPESRPVMLDPSRGQDGFFIGEPSHINSADSGFGTSFVSMPDPEMHHALTSLGHVDAVLPVLHGPYGEDGTVQGLLEMMGVPYVGCGVFASAACMDKHYTKVVLGAAGIPTAPGVTVDARNFTAADVLAKIEDAGLTYPLFIKPSRAGSSFGVTKVEKADDRETQQDRLAAAIATAGEHDWKVLVEQGIDGREIECAVLCPKAGDEPEASWPGEIVLDHQNDDQFYDFDSKYMDASASHVEVPANLPVSVLEDVRDVARRAFKAVDGAGLSRVDTFVTPDGTVMVNEINTMPGFTPISMYPKAWDATGVSYTELITRLIEGVLR.

Residues 172-391 (KVVLGAAGIP…YTELITRLIE (220 aa)) form the ATP-grasp domain. 204-266 (DAGLTYPLFI…EQGIDGREIE (63 aa)) provides a ligand contact to ATP. Positions 345, 358, and 360 each coordinate Mg(2+).

The protein belongs to the D-alanine--D-alanine ligase family. Mg(2+) serves as cofactor. Mn(2+) is required as a cofactor.

It is found in the cytoplasm. It carries out the reaction 2 D-alanine + ATP = D-alanyl-D-alanine + ADP + phosphate + H(+). The protein operates within cell wall biogenesis; peptidoglycan biosynthesis. Functionally, cell wall formation. The protein is D-alanine--D-alanine ligase of Bifidobacterium longum subsp. infantis (strain ATCC 15697 / DSM 20088 / JCM 1222 / NCTC 11817 / S12).